Consider the following 89-residue polypeptide: Small ribosomal subunit protein uS15 (89 aa).

This sequence belongs to the universal ribosomal protein uS15 family. In terms of assembly, part of the 30S ribosomal subunit. Forms a bridge to the 50S subunit in the 70S ribosome, contacting the 23S rRNA.

One of the primary rRNA binding proteins, it binds directly to 16S rRNA where it helps nucleate assembly of the platform of the 30S subunit by binding and bridging several RNA helices of the 16S rRNA. In terms of biological role, forms an intersubunit bridge (bridge B4) with the 23S rRNA of the 50S subunit in the ribosome. This is Small ribosomal subunit protein uS15 from Psychromonas ingrahamii (strain DSM 17664 / CCUG 51855 / 37).